A 371-amino-acid polypeptide reads, in one-letter code: MPHQQMLILFGLLPVATNISTWWNFGSMLLACTSMQVLTGFFLAVHYTANINLAFSSIVHITRDVPYGWMMQNLHAIGASMFFICIYIHIARGLYYGSYLNKKTWLSGTTLLIMLMATAFFGYVLPWGQMSFWAATVITNLLTAIPYLGTTMTTWLWGGFAINDPTLTRFSALHFILSFGIISLLSLHIMLLHEDGWSNPLGTNSDIDKIPFHPYQTYKDLLMLSLVILMLLMTVSFLPDIFNDPENFSKANPLVTPQHIKPEWYFLFAYGILRSIPNKLGGALALAMSIMILLTAPFTHTSTIRSMTFRPIMQLMFWTLVATFAVITWSATKPVEPPFTVISQIASTIYFLFLIMNPILGWVENKIMKHS.

Helical transmembrane passes span 25–45 (FGSM…FLAV), 69–90 (WMMQ…YIHI), 105–125 (WLSG…GYVL), and 170–190 (FSAL…LHIM). 2 residues coordinate heme b: His-75 and His-89. 2 residues coordinate heme b: His-174 and His-188. His-193 lines the a ubiquinone pocket. Transmembrane regions (helical) follow at residues 218–238 (YKDL…VSFL), 280–300 (LGGA…PFTH), 312–332 (IMQL…WSAT), and 339–358 (FTVI…IMNP).

Belongs to the cytochrome b family. As to quaternary structure, the cytochrome bc1 complex contains 3 respiratory subunits (MT-CYB, CYC1 and UQCRFS1), 2 core proteins (UQCRC1 and UQCRC2) and probably 6 low-molecular weight proteins. The cofactor is heme b.

The protein localises to the mitochondrion inner membrane. Functionally, component of the ubiquinol-cytochrome c reductase complex (complex III or cytochrome b-c1 complex) that is part of the mitochondrial respiratory chain. The b-c1 complex mediates electron transfer from ubiquinol to cytochrome c. Contributes to the generation of a proton gradient across the mitochondrial membrane that is then used for ATP synthesis. The chain is Cytochrome b (MT-CYB) from Eryx elegans (Central Asian sand boa).